The chain runs to 208 residues: MSSLGFSVGTCSPPSEKRKCRFLVNNSLNKAEAINLRNKQKVSSDPELSFAQLSSCGRREAIIGFGFSIGLLDNVSALAETTSCEFSVSPSGLAFCDKVVGYGPEAVKGQLIKAHYVGKLENGKVFDSSYNRGKPLTFRIGVGEVIKGWDQGILGSDGIPPMLTGGKRTLRIPPELAYGDRGAGCKGGSCLIPPASVLLFDIEYIGKA.

Disulfide bonds link cysteine 84–cysteine 96 and cysteine 185–cysteine 190. One can recognise a PPIase FKBP-type domain in the interval 109 to 208 (GQLIKAHYVG…LFDIEYIGKA (100 aa)).

It belongs to the FKBP-type PPIase family. In terms of assembly, interacts in vitro with LTO1. The precursor, but not the mature form of the protein, interacts with the Rieske protein. Expressed in stems, leaves and developing flower buds, but not in roots.

The protein localises to the plastid. Its subcellular location is the chloroplast thylakoid lumen. The catalysed reaction is [protein]-peptidylproline (omega=180) = [protein]-peptidylproline (omega=0). PPIase activity is optimal in oxidized form (S-S) and minimal in reduced form (SH). Reduction of the oxidized form is mediated by thioredoxin (TRX-M). In terms of biological role, PPIases accelerate the folding of proteins. It catalyzes the cis-trans isomerization of proline imidic peptide bonds in oligopeptides. Responsive of the major PPIase activity in the chloroplast thylakoid lumen. Regulates the accumulation of Rieske protein, an essential component of the photosynthetic electron transport chain. This Arabidopsis thaliana (Mouse-ear cress) protein is Peptidyl-prolyl cis-trans isomerase FKBP13, chloroplastic.